A 425-amino-acid chain; its full sequence is Pectate lyase L (425 aa).

The N-terminal stretch at 1-25 (MKYLNCFISTGLAAFFLVNSTSVLA) is a signal peptide. An intrachain disulfide couples C28 to C114. The Ca(2+) site is built by D209, D233, D234, and D237. K273 serves as the catalytic Proton acceptor. Ca(2+)-binding residues include N402, S413, A416, D418, and E423.

Belongs to the polysaccharide lyase 9 family. The cofactor is Ca(2+).

The protein resides in the secreted. The enzyme catalyses Eliminative cleavage of (1-&gt;4)-alpha-D-galacturonan to give oligosaccharides with 4-deoxy-alpha-D-galact-4-enuronosyl groups at their non-reducing ends.. Its pathway is glycan metabolism; pectin degradation; 2-dehydro-3-deoxy-D-gluconate from pectin: step 2/5. Functionally, presents an endo-cleaving activity on polygalacturonate or partially methylated pectin. Is effective in the maceration of plant tissue, and has an important role in soft-rot disease. Is 280-fold less active against polygalacturonate than the major pectate lyase PelB. When assayed on polygalacturonate, PelL releases oligogalacturonates of different sizes; upon prolonged incubation, PelL degrades the primary products to unsaturated tetramer and pentamer in addition to unsaturated dimer and trimer. When assayed on oligogalacturonates (degrees of polymerization of 2 to 8), it preferentially forms unsaturated tetramer, and displays the highest activity on the octamer. This chain is Pectate lyase L (pelL), found in Dickeya dadantii (strain 3937) (Erwinia chrysanthemi (strain 3937)).